We begin with the raw amino-acid sequence, 358 residues long: Uroporphyrinogen decarboxylase (358 aa).

Substrate-binding positions include 27-31 (RQAGR), Asp77, Tyr154, Ser209, and His327.

This sequence belongs to the uroporphyrinogen decarboxylase family. As to quaternary structure, homodimer.

The protein resides in the cytoplasm. It catalyses the reaction uroporphyrinogen III + 4 H(+) = coproporphyrinogen III + 4 CO2. The protein operates within porphyrin-containing compound metabolism; protoporphyrin-IX biosynthesis; coproporphyrinogen-III from 5-aminolevulinate: step 4/4. In terms of biological role, catalyzes the decarboxylation of four acetate groups of uroporphyrinogen-III to yield coproporphyrinogen-III. This Azoarcus sp. (strain BH72) protein is Uroporphyrinogen decarboxylase.